Reading from the N-terminus, the 340-residue chain is N(4)-(Beta-N-acetylglucosaminyl)-L-asparaginase (340 aa).

The N-terminal stretch at 1-45 (MRIIYKQQTMNNNRRDFIKKLGIATAAIAINPLEAKNLLDTSEPK) is a signal peptide. The active-site Nucleophile is the Thr197. Residues 225–228 (RVGD) and 248–251 (TGHG) each bind substrate.

This sequence belongs to the Ntn-hydrolase family. As to quaternary structure, heterotetramer of two alpha and two beta chains arranged as a dimer of alpha/beta heterodimers. Cleaved into an alpha and beta chain by autocatalysis; this activates the enzyme. The N-terminal residue of the beta subunit is responsible for the nucleophile hydrolase activity.

Its subcellular location is the periplasm. The enzyme catalyses N(4)-(beta-N-acetyl-D-glucosaminyl)-L-asparagine + H2O = N-acetyl-beta-D-glucosaminylamine + L-aspartate + H(+). Its function is as follows. Cleaves the GlcNAc-Asn bond which joins oligosaccharides to the peptide of asparagine-linked glycoproteins. Requires that the glycosylated asparagine moiety is not substituted on its N-(R1) and C- (R2) terminus. The protein is N(4)-(Beta-N-acetylglucosaminyl)-L-asparaginase of Elizabethkingia miricola (Chryseobacterium miricola).